Reading from the N-terminus, the 432-residue chain is MEYTVEDLSPVKKKVNISVPVEEVEAALSAAIAMYRTNMSLDGFRKGKVPSNLVESRFRKEIYGEATQDLVNVHINEVMTALDANPISRIDFDGGQLERGTPFEYSISFEVLPEFDLPDYDGFAVEQEKAVVDMKEVDEVITRIRTNMAELVPVAEARPGKDGDVVVLDFAAFENGEPVEGISAENFQMNLGDRQALEDFENLVKTLAPGQEGEGPLNFPADFINPDFAGKSLTVKVKVHAVKERRLPEANDELAQKAGGFESMDKMREAVTSSYMQSRTQLVKATAQKTMLDKLLKMVDFPLPESMVDMYVGHLLDDMRSKLERQGKSMESLGKKPEELRAEVRPEAEQVTRTQIFLLRAARKEGVEVNEQEIDGQIQQIAMRSGQDYNALKDYYIKNNLIFSLRDRMLADKAMDAIYEKAAVTEVEPAAK.

In terms of domain architecture, PPIase FKBP-type spans 163–248 (GDVVVLDFAA…VHAVKERRLP (86 aa)).

Belongs to the FKBP-type PPIase family. Tig subfamily.

The protein resides in the cytoplasm. It catalyses the reaction [protein]-peptidylproline (omega=180) = [protein]-peptidylproline (omega=0). Its function is as follows. Involved in protein export. Acts as a chaperone by maintaining the newly synthesized protein in an open conformation. Functions as a peptidyl-prolyl cis-trans isomerase. The sequence is that of Trigger factor from Nitratidesulfovibrio vulgaris (strain DSM 19637 / Miyazaki F) (Desulfovibrio vulgaris).